Reading from the N-terminus, the 247-residue chain is 3-deoxy-manno-octulosonate cytidylyltransferase (247 aa).

This sequence belongs to the KdsB family.

The protein resides in the cytoplasm. The enzyme catalyses 3-deoxy-alpha-D-manno-oct-2-ulosonate + CTP = CMP-3-deoxy-beta-D-manno-octulosonate + diphosphate. It participates in nucleotide-sugar biosynthesis; CMP-3-deoxy-D-manno-octulosonate biosynthesis; CMP-3-deoxy-D-manno-octulosonate from 3-deoxy-D-manno-octulosonate and CTP: step 1/1. It functions in the pathway bacterial outer membrane biogenesis; lipopolysaccharide biosynthesis. Its function is as follows. Activates KDO (a required 8-carbon sugar) for incorporation into bacterial lipopolysaccharide in Gram-negative bacteria. This chain is 3-deoxy-manno-octulosonate cytidylyltransferase, found in Pelodictyon phaeoclathratiforme (strain DSM 5477 / BU-1).